Reading from the N-terminus, the 372-residue chain is MKYDLIIIGSGSVGAAAGYYATRAGLNVLMTDAHMPPHQHGSHHGDTRLIRHAYGEGEKYVPLVLRAQMLWDELSRHNEDDPIFVRSGVINLGPADSAFLANVAHSAEQWQLNVEKLDAQGIMARWPEIRVPDNYIGLFETDSGFLRSELAIKTWIQLAKEAGCAQLFNCPVTAIRHDDDGVTIETADGVYQAKKAIVCAGTWVKDLLPELPVQPVRKVFAWYQADGRYSVKNKFPAFTGELPNGDQYYGFPAENDALKIGKHNGGQVIHSADERVPFAEVVSDGSEAFPFLRNVLPGIGCCLYGAACTYDNSPDEDFIIDTLPGHDNTLLITGLSGHGFKFASVLGEIAADFAQDKKSDFDLTPFRLSRFQ.

4-34 (DLIIIGSGSVGAAAGYYATRAGLNVLMTDAH) serves as a coordination point for FAD. Cys-308 is modified (S-8alpha-FAD cysteine).

Belongs to the MSOX/MTOX family. MTOX subfamily. Monomer. FAD is required as a cofactor.

It catalyses the reaction N(alpha)-methyl-L-tryptophan + O2 + H2O = L-tryptophan + formaldehyde + H2O2. In terms of biological role, catalyzes the oxidative demethylation of N-methyl-L-tryptophan. The polypeptide is N-methyl-L-tryptophan oxidase (Escherichia coli O81 (strain ED1a)).